The chain runs to 354 residues: DNA ligase C2 (354 aa).

Lys-29 (N6-AMP-lysine intermediate) is an active-site residue.

Belongs to the ATP-dependent DNA ligase family.

The enzyme catalyses ATP + (deoxyribonucleotide)n-3'-hydroxyl + 5'-phospho-(deoxyribonucleotide)m = (deoxyribonucleotide)n+m + AMP + diphosphate.. Functionally, DNA ligase that seals nicks in double-stranded DNA during DNA replication, DNA recombination and DNA repair. Has weak intrinsic nick joining activities and accumulates DNA-adenylate. Acts as a backup for LigD in the Ku-LigD-dependent NHEJ pathway. The polypeptide is DNA ligase C2 (ligC2) (Mycolicibacterium smegmatis (strain ATCC 700084 / mc(2)155) (Mycobacterium smegmatis)).